A 110-amino-acid polypeptide reads, in one-letter code: Host transcription reprogramming factor 2 (110 aa).

Positions 1–18 (MHLKASSILALLVIGANA) are cleaved as a signal peptide. A C2H2-type zinc finger spans residues 68 to 96 (IMCGYCGKRFWNKPDLEKHIKLKPSKGGH). The segment at 88 to 110 (KLKPSKGGHKGQPYKEHSWNRPT) is disordered. Positions 100 to 110 (PYKEHSWNRPT) are enriched in basic and acidic residues.

It localises to the secreted. Its subcellular location is the host nucleus. Functionally, secreted effector that translocates into the nuclei of host cells to reprogram the expression of immunity-associated genes by binding to effector binding elements (EBEs) in rice. Binds the 5'-CCACCTCC-3' EBE of promoters from targeted rice genes and probably recruits a yet to be determined host repressor. Causes ambivalent immunity with increased susceptibility to the hemibiotrophic pathogens Magnaporthe oryzae and Xanthomonas oryzae pv. oryzae, but enhances resistance to Cochliobolus miyabeanus, a necrotrophic pathogen. The polypeptide is Host transcription reprogramming factor 2 (Pyricularia oryzae (strain 70-15 / ATCC MYA-4617 / FGSC 8958) (Rice blast fungus)).